A 173-amino-acid chain; its full sequence is Co-chaperone protein HscB homolog (173 aa).

The region spanning 3–75 (NPFSLFNLPV…IARATAIIEI (73 aa)) is the J domain.

This sequence belongs to the HscB family. As to quaternary structure, interacts with HscA and stimulates its ATPase activity.

Functionally, co-chaperone involved in the maturation of iron-sulfur cluster-containing proteins. Seems to help targeting proteins to be folded toward HscA. In Haemophilus ducreyi (strain 35000HP / ATCC 700724), this protein is Co-chaperone protein HscB homolog.